A 301-amino-acid chain; its full sequence is MTMPSTQFHTTILEQFSLFLSVDRGLCQQSIAAYRQDISSFLTISAISSPQDISQNSVYIFAEELYRRKEAETTLARRLIALKVFFLFLKDQQLLPYPPIIEHPKIWKRLPSVLTPQEVDALLAVPLQMEKNPRHLAFRDTAILHTLYSTGVRVSELCDLRLGHVSDDCIRVTGKGSKTRLVPLGSRAREAIDAYLCPFRDQYQKKNPHEDHLFLSTRGHKLERSCVWRRIHNYAKQVTSKPVSPHSLRHAFATHLLDNKADLRVIQEMLGHARIASTEVYTHVAADSLIEKFLAHHPRNL.

The 84-residue stretch at 7-90 (QFHTTILEQF…ALKVFFLFLK (84 aa)) folds into the Core-binding (CB) domain. A Tyr recombinase domain is found at 109–294 (RLPSVLTPQE…AADSLIEKFL (186 aa)). Catalysis depends on residues R153, K175, H246, R249, and H272. Catalysis depends on Y281, which acts as the O-(3'-phospho-DNA)-tyrosine intermediate.

This sequence belongs to the 'phage' integrase family. XerD subfamily. As to quaternary structure, forms a cyclic heterotetrameric complex composed of two molecules of XerC and two molecules of XerD.

The protein resides in the cytoplasm. Functionally, site-specific tyrosine recombinase, which acts by catalyzing the cutting and rejoining of the recombining DNA molecules. The XerC-XerD complex is essential to convert dimers of the bacterial chromosome into monomers to permit their segregation at cell division. It also contributes to the segregational stability of plasmids. This is Tyrosine recombinase XerD from Chlamydia pneumoniae (Chlamydophila pneumoniae).